The sequence spans 557 residues: Ribonuclease J 2 (557 aa).

Zn(2+)-binding residues include His-76, His-78, His-144, and Glu-166. 366–370 provides a ligand contact to substrate; it reads HASSH.

Belongs to the metallo-beta-lactamase superfamily. RNA-metabolizing metallo-beta-lactamase-like family. Bacterial RNase J subfamily. As to quaternary structure, homodimer, may be a subunit of the RNA degradosome. It depends on Zn(2+) as a cofactor.

It localises to the cytoplasm. Functionally, an RNase that has 5'-3' exonuclease and possibly endoonuclease activity. Involved in maturation of rRNA and in some organisms also mRNA maturation and/or decay. The protein is Ribonuclease J 2 of Staphylococcus aureus (strain MRSA252).